Here is a 66-residue protein sequence, read N- to C-terminus: Alpha-actitoxin-Ms11a-1 (66 aa).

Residues 1–24 (MASKIFFVLAVFLVMSAVLPESFA) form the signal peptide. 3 cysteine pairs are disulfide-bonded: cysteine 26-cysteine 41, cysteine 33-cysteine 46, and cysteine 40-cysteine 61.

It localises to the secreted. It is found in the nematocyst. In terms of biological role, alpha-toxins act on postsynaptic membranes, they bind to the nicotinic acetylcholine receptors (nAChR) and thus inhibit them. This toxin competes with alpha-bungarotoxin for binding to orthosteric sites on muscle-type T.carlifornicus (IC(50)=408 nM) and human alpha-7/CHRNA7 nAChRs (IC(50)=14.16 uM). This is Alpha-actitoxin-Ms11a-1 from Metridium senile (Brown sea anemone).